The primary structure comprises 629 residues: Pentatricopeptide repeat-containing protein At1g62930, chloroplastic (629 aa).

A chloroplast-targeting transit peptide spans 1 to 41 (MTSCVHLGIVASQSKKMSLAKRFAQLRKASPLFSLRGVYFS). PPR repeat units lie at residues 79 to 113 (SIVE…RISY), 114 to 148 (DLYS…GYEP), 149 to 183 (DIVT…EYQP), 184 to 218 (NTVT…GCQP), 219 to 253 (DLFT…KIEA), 254 to 288 (DVVI…GIRP), 289 to 323 (NVVT…KINP), 324 to 358 (NVVT…SIDP), 359 to 393 (DIFT…DCFP), 394 to 428 (NVVT…GLVG), 429 to 463 (NTVT…GVPP), 464 to 498 (DIIT…KMEP), 499 to 533 (DIYT…GVKP), 534 to 568 (NVII…GTLP), and 569 to 603 (NSGT…GFVG).

The protein belongs to the PPR family. P subfamily.

The protein resides in the plastid. It localises to the chloroplast. The protein is Pentatricopeptide repeat-containing protein At1g62930, chloroplastic of Arabidopsis thaliana (Mouse-ear cress).